The sequence spans 524 residues: Na(+)/H(+) antiporter NhaB (524 aa).

The next 12 membrane-spanning stretches (helical) occupy residues isoleucine 23–alanine 43, glycine 44–leucine 64, leucine 97–phenylalanine 117, leucine 120–phenylalanine 140, phenylalanine 144–isoleucine 164, leucine 203–proline 223, phenylalanine 236–leucine 256, alanine 304–isoleucine 324, phenylalanine 354–phenylalanine 374, leucine 392–valine 412, alanine 448–isoleucine 468, and valine 476–phenylalanine 496.

It belongs to the NhaB Na(+)/H(+) (TC 2.A.34) antiporter family.

Its subcellular location is the cell inner membrane. It carries out the reaction 2 Na(+)(in) + 3 H(+)(out) = 2 Na(+)(out) + 3 H(+)(in). Na(+)/H(+) antiporter that extrudes sodium in exchange for external protons. This is Na(+)/H(+) antiporter NhaB from Edwardsiella ictaluri (strain 93-146).